The sequence spans 1086 residues: Selenocysteine insertion sequence-binding protein 2-like (1086 aa).

Disordered stretches follow at residues 155-207 (GQAF…GPDS), 243-386 (AKGR…SESL), 615-657 (QEDA…SPMA), 880-904 (SDGL…KPSR), and 919-1086 (AAGS…PQST). Residues 193-206 (NVATQKETSATGPD) are compositionally biased toward polar residues. Ser-276 is subject to Phosphoserine. Composition is skewed to polar residues over residues 294–303 (GTMNRLESSG) and 328–344 (QAFS…NNLQ). A compositionally biased stretch (basic and acidic residues) spans 355–370 (SSERRQNLQKRQDNKH). Residues 624-657 (SDASLSPASQNSPYCMTPVSQGSPASSGIGSPMA) show a composition bias toward polar residues. Residues 922–931 (SITSAPSQGK) show a composition bias toward polar residues. A compositionally biased stretch (basic and acidic residues) spans 933–943 (TGDKDELKPDD). Positions 947–957 (ASQQSTETGSL) are enriched in polar residues. Residues 981–994 (LEEEEDEEEEEEDY) show a composition bias toward acidic residues. The segment covering 1004–1022 (QLNSRIESWVSETQRTMET) has biased composition (polar residues). Residues 1032 to 1046 (SEEDSAEQSGEEAAE) are compositionally biased toward acidic residues.

In terms of biological role, binds SECIS (Sec insertion sequence) elements present on selenocysteine (Sec) protein mRNAs, but does not promote Sec incorporation into selenoproteins. The chain is Selenocysteine insertion sequence-binding protein 2-like (Secisbp2l) from Mus musculus (Mouse).